The primary structure comprises 88 residues: Small ribosomal subunit protein bS20 (88 aa).

A disordered region spans residues 1-25; it reads MANSPQAKKRARQNERRAEVNKARR. The span at 12–22 shows a compositional bias: basic and acidic residues; that stretch reads RQNERRAEVNK.

Belongs to the bacterial ribosomal protein bS20 family.

Functionally, binds directly to 16S ribosomal RNA. In Dinoroseobacter shibae (strain DSM 16493 / NCIMB 14021 / DFL 12), this protein is Small ribosomal subunit protein bS20.